A 225-amino-acid polypeptide reads, in one-letter code: N-(5'-phosphoribosyl)anthranilate isomerase (225 aa).

The protein belongs to the TrpF family.

It catalyses the reaction N-(5-phospho-beta-D-ribosyl)anthranilate = 1-(2-carboxyphenylamino)-1-deoxy-D-ribulose 5-phosphate. It participates in amino-acid biosynthesis; L-tryptophan biosynthesis; L-tryptophan from chorismate: step 3/5. The sequence is that of N-(5'-phosphoribosyl)anthranilate isomerase from Nitrobacter winogradskyi (strain ATCC 25391 / DSM 10237 / CIP 104748 / NCIMB 11846 / Nb-255).